The primary structure comprises 179 residues: ADP-ribosylation factor-like protein 5A (179 aa).

Residue G2 is the site of N-myristoyl glycine attachment. GTP-binding positions include 23-30, 66-70, 125-128, and A159; these read GLDNAGKT, DIGGQ, and NKQD.

The protein belongs to the small GTPase superfamily. Arf family.

In terms of biological role, lacks ADP-ribosylation enhancing activity. This Mus musculus (Mouse) protein is ADP-ribosylation factor-like protein 5A (Arl5a).